The sequence spans 212 residues: Uracil phosphoribosyltransferase (212 aa).

5-phospho-alpha-D-ribose 1-diphosphate is bound by residues R78, R103, and 130–138 (DPMLATGSS). Uracil-binding positions include I193 and 198–200 (GDA). Position 199 (D199) interacts with 5-phospho-alpha-D-ribose 1-diphosphate.

It belongs to the UPRTase family. Mg(2+) is required as a cofactor.

The catalysed reaction is UMP + diphosphate = 5-phospho-alpha-D-ribose 1-diphosphate + uracil. It functions in the pathway pyrimidine metabolism; UMP biosynthesis via salvage pathway; UMP from uracil: step 1/1. Its activity is regulated as follows. Allosterically activated by GTP. In terms of biological role, catalyzes the conversion of uracil and 5-phospho-alpha-D-ribose 1-diphosphate (PRPP) to UMP and diphosphate. The chain is Uracil phosphoribosyltransferase from Pseudomonas syringae pv. tomato (strain ATCC BAA-871 / DC3000).